We begin with the raw amino-acid sequence, 448 residues long: MSQSTATYINVIGAGLAGSEAAYQIAKRGIPVKLYEMRGVKATPQHKTTNFAELVCSNSFRGDSLTNAVGLLKEEMRRLDSIIMRNGEANRVPAGGAMAVDREGYAKSVTAELENHPLIEVIRDEITEIPNDAITVIATGPLTSDALSEKIHAVNGGDGFYFYDAAAPIIDKSTIDMSKVYLKSRYDKGEAAYLNCPMTKEEFMAFHEALTTAEEAPLNAFEKEKYFEGCMPIEVMAKRGIKTMLYGPMKPVGLEYPDDYTGPRDGEFKTPYAVVQLRQDNAAGSLYNIVGFQTHLKWGEQKRVFQMIPGLENAEFVRYGVMHRNSYMDSPNLLTETFQSRSNPNLFFAGQMTGVEGYVESAASGLVAGINAARLFKREEALIFPQTTAIGSLPHYVTHADSKHFQPMNVNFGIIKELEGPRIRDKKERYEAIASRALADLDTCLALL.

Residue 13–18 (GAGLAG) coordinates FAD.

Belongs to the MnmG family. TrmFO subfamily. Requires FAD as cofactor.

Its subcellular location is the cytoplasm. The catalysed reaction is uridine(54) in tRNA + (6R)-5,10-methylene-5,6,7,8-tetrahydrofolate + NADH + H(+) = 5-methyluridine(54) in tRNA + (6S)-5,6,7,8-tetrahydrofolate + NAD(+). The enzyme catalyses uridine(54) in tRNA + (6R)-5,10-methylene-5,6,7,8-tetrahydrofolate + NADPH + H(+) = 5-methyluridine(54) in tRNA + (6S)-5,6,7,8-tetrahydrofolate + NADP(+). In terms of biological role, catalyzes the folate-dependent formation of 5-methyl-uridine at position 54 (M-5-U54) in all tRNAs. The sequence is that of Methylenetetrahydrofolate--tRNA-(uracil-5-)-methyltransferase TrmFO from Streptococcus pyogenes serotype M18 (strain MGAS8232).